The sequence spans 422 residues: Biofilm regulator 1 (422 aa).

2 stretches are compositionally biased toward low complexity: residues 1–19 and 36–45; these read MSSSSSLSSSTTTATTTSA and SGGSNNGNGS. Disordered stretches follow at residues 1–86 and 116–207; these read MSSS…KCPP and RLSS…PSHP. Over residues 46–61 the composition is skewed to polar residues; sequence ALKSQISPRLSDTSRI. 2 stretches are compositionally biased toward low complexity: residues 69-81 and 120-143; these read TSGSSTPTSSSTP and PTLPVKVQPQQQPQLPPASSLSPV. A compositionally biased stretch (polar residues) spans 146 to 159; that stretch reads VINTPPQQPQSVSA. The segment covering 160 to 194 has biased composition (low complexity); it reads STSPNTQYQYYQYQQQSSPIQQQQQQQQATPAATP. The segment covering 195 to 205 has biased composition (polar residues); sequence TVMQMAQNQPS. Residues 282–307 form a GATA-type zinc finger; it reads CHRCGTTETPEWRRGPKGVRTLCNAC.

Interacts with HDA1.

The protein localises to the nucleus. Transcription factor required for hyphal growth, biofilm formation, and virulence. Promotes formation of both conventional and pheromone-stimulated biofilms. Binds and recruits HDA1 to promoters of hypha-specific genes in a rapamycin-dependent manner. Involved in the switch between two heritable states, the white and opaque states. These two cell types differ in many characteristics, including cell structure, mating competence, and virulence. Each state is heritable for many generations, and switching between states occurs stochastically at low frequency. The sequence is that of Biofilm regulator 1 (BRG1) from Candida albicans (strain SC5314 / ATCC MYA-2876) (Yeast).